We begin with the raw amino-acid sequence, 260 residues long: Large ribosomal subunit protein uL2y (260 aa).

The interval 227–248 (RRDKSAGAKVGQIAARRTGRRR) is disordered.

Belongs to the universal ribosomal protein uL2 family.

This Arabidopsis thaliana (Mouse-ear cress) protein is Large ribosomal subunit protein uL2y (RPL8B).